The chain runs to 425 residues: Serine--tRNA ligase (425 aa).

L-serine is bound at residue 233-235 (TAE). 264–266 (RRE) contributes to the ATP binding site. L-serine is bound at residue glutamate 287. Residue 351–354 (EISS) coordinates ATP. Serine 387 provides a ligand contact to L-serine.

It belongs to the class-II aminoacyl-tRNA synthetase family. Type-1 seryl-tRNA synthetase subfamily. Homodimer. The tRNA molecule binds across the dimer.

It is found in the cytoplasm. The enzyme catalyses tRNA(Ser) + L-serine + ATP = L-seryl-tRNA(Ser) + AMP + diphosphate + H(+). It carries out the reaction tRNA(Sec) + L-serine + ATP = L-seryl-tRNA(Sec) + AMP + diphosphate + H(+). Its pathway is aminoacyl-tRNA biosynthesis; selenocysteinyl-tRNA(Sec) biosynthesis; L-seryl-tRNA(Sec) from L-serine and tRNA(Sec): step 1/1. Functionally, catalyzes the attachment of serine to tRNA(Ser). Is also able to aminoacylate tRNA(Sec) with serine, to form the misacylated tRNA L-seryl-tRNA(Sec), which will be further converted into selenocysteinyl-tRNA(Sec). The polypeptide is Serine--tRNA ligase (Thermotoga neapolitana (strain ATCC 49049 / DSM 4359 / NBRC 107923 / NS-E)).